Here is a 178-residue protein sequence, read N- to C-terminus: N-alpha-acetyltransferase 80 (178 aa).

In terms of domain architecture, N-acetyltransferase spans V26–L178. Residues R48, R53 to S56, N88, and S98 each bind substrate. Acetyl-CoA-binding positions include V99 to V101 and G107 to K112. Position 134 (S134) interacts with substrate. Residue Q138 coordinates acetyl-CoA.

Belongs to the acetyltransferase family.

The enzyme catalyses N-terminal L-aspartyl-L-aspartyl-L-aspartyl-[protein] + acetyl-CoA = N-terminal N-acetyl-L-aspartyl-L-aspartyl-L-aspartyl-[protein] + CoA + H(+). It carries out the reaction N-terminal L-glutamyl-L-glutamyl-L-glutamyl-[protein] + acetyl-CoA = N-terminal N-acetyl-L-glutamyl-L-glutamyl-L-glutamyl-[protein] + CoA + H(+). N-alpha-acetyltransferase that acetylates the amino terminal acidic residue of proteins devoid of initiator methionine. Preferentially acts on proteins starting with Asp-Asp-Asp and Glu-Glu-Glu sequences. In vitro, shows high activity towards N-terminal sequences starting with Met-Asp-Glu-Leu, Met-Glu-Glu-Glu and Met-Asp-Asp-Asp. The sequence is that of N-alpha-acetyltransferase 80 from Drosophila melanogaster (Fruit fly).